Reading from the N-terminus, the 945-residue chain is Alanine--tRNA ligase (945 aa).

Zn(2+)-binding residues include His564, His568, Cys666, and His670. A disordered region spans residues Ser911–Gly945.

The protein belongs to the class-II aminoacyl-tRNA synthetase family. The cofactor is Zn(2+).

The protein resides in the cytoplasm. It catalyses the reaction tRNA(Ala) + L-alanine + ATP = L-alanyl-tRNA(Ala) + AMP + diphosphate. Functionally, catalyzes the attachment of alanine to tRNA(Ala) in a two-step reaction: alanine is first activated by ATP to form Ala-AMP and then transferred to the acceptor end of tRNA(Ala). Also edits incorrectly charged Ser-tRNA(Ala) and Gly-tRNA(Ala) via its editing domain. This chain is Alanine--tRNA ligase, found in Rhodopirellula baltica (strain DSM 10527 / NCIMB 13988 / SH1).